The primary structure comprises 146 residues: uncharacterized protein (146 aa).

The chain crosses the membrane as a helical span at residues 7 to 27 (FVLSITIVLVILIIIAYIWYN).

Belongs to the asfivirus E146L family.

The protein localises to the host membrane. It is found in the virion. This is an uncharacterized protein from Ornithodoros (relapsing fever ticks).